The primary structure comprises 216 residues: Outer-membrane lipoprotein LolB (216 aa).

The N-terminal stretch at 1–24 (MNNLNYFTKISASCAALALMTLAG) is a signal peptide. Cys25 is lipidated: N-palmitoyl cysteine. Cys25 carries S-diacylglycerol cysteine lipidation.

Belongs to the LolB family. Monomer.

The protein localises to the cell outer membrane. Plays a critical role in the incorporation of lipoproteins in the outer membrane after they are released by the LolA protein. This chain is Outer-membrane lipoprotein LolB, found in Shewanella loihica (strain ATCC BAA-1088 / PV-4).